The primary structure comprises 393 residues: Tryptophan synthase beta chain (393 aa).

K86 is subject to N6-(pyridoxal phosphate)lysine.

Belongs to the TrpB family. In terms of assembly, tetramer of two alpha and two beta chains. The cofactor is pyridoxal 5'-phosphate.

The enzyme catalyses (1S,2R)-1-C-(indol-3-yl)glycerol 3-phosphate + L-serine = D-glyceraldehyde 3-phosphate + L-tryptophan + H2O. It participates in amino-acid biosynthesis; L-tryptophan biosynthesis; L-tryptophan from chorismate: step 5/5. Its function is as follows. The beta subunit is responsible for the synthesis of L-tryptophan from indole and L-serine. In Alteromonas mediterranea (strain DSM 17117 / CIP 110805 / LMG 28347 / Deep ecotype), this protein is Tryptophan synthase beta chain.